The following is a 72-amino-acid chain: Translation initiation factor IF-1 (72 aa).

The region spanning 1 to 72 (MSDKSIKMQA…SNGRITYRHK (72 aa)) is the S1-like domain.

Belongs to the IF-1 family. In terms of assembly, component of the 30S ribosomal translation pre-initiation complex which assembles on the 30S ribosome in the order IF-2 and IF-3, IF-1 and N-formylmethionyl-tRNA(fMet); mRNA recruitment can occur at any time during PIC assembly.

It is found in the cytoplasm. One of the essential components for the initiation of protein synthesis. Stabilizes the binding of IF-2 and IF-3 on the 30S subunit to which N-formylmethionyl-tRNA(fMet) subsequently binds. Helps modulate mRNA selection, yielding the 30S pre-initiation complex (PIC). Upon addition of the 50S ribosomal subunit IF-1, IF-2 and IF-3 are released leaving the mature 70S translation initiation complex. The chain is Translation initiation factor IF-1 from Mycoplasmopsis pulmonis (strain UAB CTIP) (Mycoplasma pulmonis).